Consider the following 229-residue polypeptide: Uracil-DNA glycosylase (229 aa).

D70 acts as the Proton acceptor in catalysis.

Belongs to the uracil-DNA glycosylase (UDG) superfamily. UNG family.

It is found in the cytoplasm. The enzyme catalyses Hydrolyzes single-stranded DNA or mismatched double-stranded DNA and polynucleotides, releasing free uracil.. In terms of biological role, excises uracil residues from the DNA which can arise as a result of misincorporation of dUMP residues by DNA polymerase or due to deamination of cytosine. This Chlamydia felis (strain Fe/C-56) (Chlamydophila felis) protein is Uracil-DNA glycosylase.